The primary structure comprises 267 residues: Diphthine--ammonia ligase (267 aa).

Residue Y97 is modified to Phosphotyrosine.

It belongs to the Diphthine--ammonia ligase family.

The catalysed reaction is diphthine-[translation elongation factor 2] + NH4(+) + ATP = diphthamide-[translation elongation factor 2] + AMP + diphosphate + H(+). Its pathway is protein modification; peptidyl-diphthamide biosynthesis. Functionally, amidase that catalyzes the last step of diphthamide biosynthesis using ammonium and ATP. Diphthamide biosynthesis consists in the conversion of an L-histidine residue in the translation elongation factor eEF-2 (EEF2) to diphthamide. This Bos taurus (Bovine) protein is Diphthine--ammonia ligase (DPH6).